A 342-amino-acid chain; its full sequence is L-lysine 2,3-aminomutase (342 aa).

The Radical SAM core domain maps to 106-329 (HKYHNRALLL…PKLAREIGGE (224 aa)). Residues C120, C124, and C127 each coordinate [4Fe-4S] cluster. Residue K332 is modified to N6-(pyridoxal phosphate)lysine.

Belongs to the radical SAM superfamily. KamA family. [4Fe-4S] cluster is required as a cofactor. Requires pyridoxal 5'-phosphate as cofactor.

The enzyme catalyses L-lysine = D-beta-lysine. With EpmA is involved in the beta-lysylation step of the post-translational modification of translation elongation factor P (EF-P) on 'Lys-34'. EpmB appears to act before EpmA. Displays lysine 2,3-aminomutase activity, producing (R)-beta-lysine from (S)-alpha-lysine (L-lysine). Cannot use (S)-ornithine or (R)-alpha-lysine as a substrate. This is L-lysine 2,3-aminomutase (epmB) from Escherichia coli (strain K12).